The primary structure comprises 106 residues: Ribulose bisphosphate carboxylase small subunit (106 aa).

It belongs to the RuBisCO small chain family. As to quaternary structure, heterohexadecamer of 8 large and 8 small subunits.

It is found in the plastid. Its subcellular location is the cyanelle. In terms of biological role, ruBisCO catalyzes two reactions: the carboxylation of D-ribulose 1,5-bisphosphate, the primary event in carbon dioxide fixation, as well as the oxidative fragmentation of the pentose substrate. Both reactions occur simultaneously and in competition at the same active site. Although the small subunit is not catalytic it is essential for maximal activity. The sequence is that of Ribulose bisphosphate carboxylase small subunit from Cyanophora paradoxa.